Consider the following 335-residue polypeptide: Lipoyl synthase (335 aa).

[4Fe-4S] cluster is bound by residues Cys-55, Cys-60, Cys-66, Cys-81, Cys-85, Cys-88, and Ser-292. Positions 67–281 constitute a Radical SAM core domain; that stretch reads WEDREATFLI…SQRAEEIGFQ (215 aa).

The protein belongs to the radical SAM superfamily. Lipoyl synthase family. [4Fe-4S] cluster serves as cofactor.

The protein localises to the cytoplasm. The enzyme catalyses [[Fe-S] cluster scaffold protein carrying a second [4Fe-4S](2+) cluster] + N(6)-octanoyl-L-lysyl-[protein] + 2 oxidized [2Fe-2S]-[ferredoxin] + 2 S-adenosyl-L-methionine + 4 H(+) = [[Fe-S] cluster scaffold protein] + N(6)-[(R)-dihydrolipoyl]-L-lysyl-[protein] + 4 Fe(3+) + 2 hydrogen sulfide + 2 5'-deoxyadenosine + 2 L-methionine + 2 reduced [2Fe-2S]-[ferredoxin]. Its pathway is protein modification; protein lipoylation via endogenous pathway; protein N(6)-(lipoyl)lysine from octanoyl-[acyl-carrier-protein]: step 2/2. In terms of biological role, catalyzes the radical-mediated insertion of two sulfur atoms into the C-6 and C-8 positions of the octanoyl moiety bound to the lipoyl domains of lipoate-dependent enzymes, thereby converting the octanoylated domains into lipoylated derivatives. This Micrococcus luteus (strain ATCC 4698 / DSM 20030 / JCM 1464 / CCM 169 / CCUG 5858 / IAM 1056 / NBRC 3333 / NCIMB 9278 / NCTC 2665 / VKM Ac-2230) (Micrococcus lysodeikticus) protein is Lipoyl synthase.